The chain runs to 70 residues: Protein SlyX homolog (70 aa).

It belongs to the SlyX family.

This is Protein SlyX homolog from Shewanella woodyi (strain ATCC 51908 / MS32).